The chain runs to 289 residues: Mitochondrial fission regulator 1-like (289 aa).

At Thr27 the chain carries Phosphothreonine. Phosphoserine occurs at positions 38, 100, 107, 221, 222, 235, 258, and 270.

This sequence belongs to the MTFR1 family. In terms of processing, phosphorylated by AMPK. Upon stress, phosphorylation by AMPK is sufficient to induce mitochondrial fragmentation.

It localises to the mitochondrion outer membrane. Mitochondrial protein required for adaptation of miochondrial dynamics to metabolic changes. Regulates mitochondrial morphology at steady state and mediates AMPK-dependent stress-induced mitochondrial fragmentation via the control of OPA1 levels. This chain is Mitochondrial fission regulator 1-like (Mtfr1l), found in Rattus norvegicus (Rat).